A 1137-amino-acid chain; its full sequence is MSRRKPASGGLAASSSAPARQAVLSRFFQSTGSLKSTSSSTGAADQVDPGAAAAAAAAAAAAPPAPPAPAFPPQLPPHIATEIDRRKKRPLENDGPVKKKVKKVQQKEGGSDLGMSGNSEPKKCLRTRNVSKSLEKLKEFCCDSALPQSRVQTESLQERFAVLPKCTDFDDISLLHAKNAVSSEDSKRQINQKDTTLFDLSQFGSSNTSHENLQKTASKSANKRSKSIYTPLELQYIEMKQQHKDAVLCVECGYKYRFFGEDAEIAARELNIYCHLDHNFMTASIPTHRLFVHVRRLVAKGYKVGVVKQTETAALKAIGDNRSSLFSRKLTALYTKSTLIGEDVNPLIKLDDAVNVDEIMTDTSTSYLLCISENKENVRDKKKGNIFIGIVGVQPATGEVVFDSFQDSASRSELETRMSSLQPVELLLPSALSEQTEALIHRATSVSVQDDRIRVERMDNIYFEYSHAFQAVTEFYAKDTVDIKGSQIISGIVNLEKPVICSLAAIIKYLKEFNLEKMLSKPENFKQLSSKMEFMTINGTTLRNLEILQNQTDMKTKGSLLWVLDHTKTSFGRRKLKKWVTQPLLKLREINARLDAVSEVLHSESSVFGQIENHLRKLPDIERGLCSIYHKKCSTQEFFLIVKTLYHLKSEFQAIIPAVNSHIQSDLLRTVILEIPELLSPVEHYLKILNEQAAKVGDKTELFKDLSDFPLIKKRKDEIQGVIDEIRMHLQEIRKILKNPSAQYVTVSGQEFMIEIKNSAVSCIPTDWVKVGSTKAVSRFHSPFIVENYRHLNQLREQLVLDCSAEWLDFLEKFSEHYHSLCKAVHHLATVDCIFSLAKVAKQGDYCRPTVQEERKIVIKNGRHPVIDVLLGEQDQYVPNNTDLSEDSERVMIITGPNMGGKSSYIKQVALITIMAQIGSYVPAEEATIGIVDGIFTRMGAADNIYKGQSTFMEELTDTAEIIRKATSQSLVILDELGRGTSTHDGIAIAYATLEYFIRDVKSLTLFVTHYPPVCELEKNYSHQVGNYHMGFLVSEDESKLDPGAAEQVPDFVTFLYQITRGIAARSYGLNVAKLADVPGEILKKAAHKSKELEGLINTKRKRLKYFAKLWTMHNAQDLQKWTEEFNMEETQTSLLH.

Composition is skewed to low complexity over residues 31–42 and 51–62; these read TGSLKSTSSSTG and AAAAAAAAAAAA. 2 disordered regions span residues 31–122 and 201–222; these read TGSL…SEPK and SQFGSSNTSHENLQKTASKSAN. Phosphoserine is present on serine 33. A compositionally biased stretch (pro residues) spans 63-76; that stretch reads PPAPPAPAFPPQLP. Positions 75-297 are interaction with EXO1; that stretch reads LPPHIATEID…HRLFVHVRRL (223 aa). A compositionally biased stretch (basic and acidic residues) spans 81 to 97; sequence TEIDRRKKRPLENDGPV. Over residues 201 to 220 the composition is skewed to polar residues; it reads SQFGSSNTSHENLQKTASKS. 896–903 lines the ATP pocket; it reads GPNMGGKS. Position 1099 is a phosphothreonine (threonine 1099).

Belongs to the DNA mismatch repair MutS family. MSH3 subfamily. As to quaternary structure, component of the DNA mismatch repair (MMR) complex composed at least of MSH2, MSH3, MSH6, PMS1 and MLH1. Heterodimer consisting of MSH2-MSH3 (MutS beta). Forms a ternary complex with MutL alpha (MLH1-PMS1). Interacts with EXO1. Interacts with MCM9.

Its function is as follows. Component of the post-replicative DNA mismatch repair system (MMR). Heterodimerizes with MSH2 to form MutS beta which binds to DNA mismatches thereby initiating DNA repair. When bound, the MutS beta heterodimer bends the DNA helix and shields approximately 20 base pairs. MutS beta recognizes large insertion-deletion loops (IDL) up to 13 nucleotides long. After mismatch binding, forms a ternary complex with the MutL alpha heterodimer, which is thought to be responsible for directing the downstream MMR events, including strand discrimination, excision, and resynthesis. This Homo sapiens (Human) protein is DNA mismatch repair protein Msh3 (MSH3).